A 330-amino-acid chain; its full sequence is GMP reductase (330 aa).

Residue Cys180 is the Thioimidate intermediate of the active site. 209-232 is a binding site for NADP(+); sequence LIADGGIRHNGDIAKSVRFGASMV.

It belongs to the IMPDH/GMPR family. GuaC type 2 subfamily.

The catalysed reaction is IMP + NH4(+) + NADP(+) = GMP + NADPH + 2 H(+). In terms of biological role, catalyzes the irreversible NADPH-dependent deamination of GMP to IMP. It functions in the conversion of nucleobase, nucleoside and nucleotide derivatives of G to A nucleotides, and in maintaining the intracellular balance of A and G nucleotides. The protein is GMP reductase of Lactobacillus delbrueckii subsp. bulgaricus (strain ATCC 11842 / DSM 20081 / BCRC 10696 / JCM 1002 / NBRC 13953 / NCIMB 11778 / NCTC 12712 / WDCM 00102 / Lb 14).